Reading from the N-terminus, the 127-residue chain is Large ribosomal subunit protein bL12 (127 aa).

This sequence belongs to the bacterial ribosomal protein bL12 family. As to quaternary structure, homodimer. Part of the ribosomal stalk of the 50S ribosomal subunit. Forms a multimeric L10(L12)X complex, where L10 forms an elongated spine to which 2 to 4 L12 dimers bind in a sequential fashion. Binds GTP-bound translation factors.

Functionally, forms part of the ribosomal stalk which helps the ribosome interact with GTP-bound translation factors. Is thus essential for accurate translation. The polypeptide is Large ribosomal subunit protein bL12 (Streptomyces avermitilis (strain ATCC 31267 / DSM 46492 / JCM 5070 / NBRC 14893 / NCIMB 12804 / NRRL 8165 / MA-4680)).